The primary structure comprises 199 residues: Recombination protein RecR (199 aa).

Residues 58 to 73 form a C4-type zinc finger; it reads CARCGNITSADLCDIC. One can recognise a Toprim domain in the interval 81-176; it reads GELCVVEDVA…QVTSLAQGVP (96 aa).

Belongs to the RecR family.

Its function is as follows. May play a role in DNA repair. It seems to be involved in an RecBC-independent recombinational process of DNA repair. It may act with RecF and RecO. The chain is Recombination protein RecR from Cereibacter sphaeroides (strain ATCC 17025 / ATH 2.4.3) (Rhodobacter sphaeroides).